The sequence spans 108 residues: Large ribosomal subunit protein uL24 (108 aa).

It belongs to the universal ribosomal protein uL24 family. As to quaternary structure, part of the 50S ribosomal subunit.

Its function is as follows. One of two assembly initiator proteins, it binds directly to the 5'-end of the 23S rRNA, where it nucleates assembly of the 50S subunit. In terms of biological role, one of the proteins that surrounds the polypeptide exit tunnel on the outside of the subunit. This is Large ribosomal subunit protein uL24 from Geotalea daltonii (strain DSM 22248 / JCM 15807 / FRC-32) (Geobacter daltonii).